Here is a 410-residue protein sequence, read N- to C-terminus: Mating-type locus allele B4 protein (410 aa).

The segment at 1–110 (MSSDPKISIT…ANASSPVVGC (110 aa)) is variable domain between B alleles. Positions 107-184 (VVGCRELSED…NARRRSGWSH (78 aa)) form a DNA-binding region, homeobox; TALE-type. Positions 111-410 (RELSEDLPAY…PFLCLSVAFV (300 aa)) are highly conserved between B alleles. 3 disordered regions span residues 202–241 (RAKLSSSNQSTPPSPTSEYPSNNLDDFLSDNLGRPLTPAD), 278–335 (TPKP…TPEL), and 375–394 (RGNRKVKALPKRAGKQQPDE). Residues 206–222 (SSSNQSTPPSPTSEYPS) are compositionally biased toward low complexity. The Nuclear localization signal signature appears at 276–308 (KKTPKPGMPRPVTTVAKRQPARKTKPAAKPKSR). The span at 294-307 (QPARKTKPAAKPKS) shows a compositional bias: basic residues. The segment covering 312 to 335 (PRASTTPSIDSTLDSSKLESTPEL) has biased composition (polar residues). The segment at 333–410 (PELSMCSTAD…PFLCLSVAFV (78 aa)) is not essential for B4 function. Residues 375 to 388 (RGNRKVKALPKRAG) show a composition bias toward basic residues.

This sequence belongs to the TALE/M-ATYP homeobox family.

The protein resides in the nucleus. The B locus has at least 25 alleles, and any combination of two different B alleles yields a multimeric regulatory protein, that activates genes responsible for the pathogenicity and for the sexual development of the fungus within the corn plant. In Mycosarcoma maydis (Corn smut fungus), this protein is Mating-type locus allele B4 protein.